Consider the following 652-residue polypeptide: 2-oxoglutarate carboxylase large subunit (652 aa).

A Pyruvate carboxyltransferase domain is found at Ile26–Asp288. Substrate contacts are provided by residues Arg34–Gln38 and Arg105. Asp35 is a binding site for a divalent metal cation. Residues Lys196, His227, and His229 each contribute to the a divalent metal cation site. Lys196 carries the N6-carboxylysine modification. Residue Thr362 participates in substrate binding. Residues Ala563 to Lys643 form the Biotinyl-binding domain. Lys609 carries the N6-biotinyllysine modification.

Heterohexadecamer of 8 large subunits and 8 small subunits. Mg(2+) is required as a cofactor. The cofactor is Mn(2+). It depends on Co(2+) as a cofactor. Post-translationally, biotinylated.

The catalysed reaction is hydrogencarbonate + 2-oxoglutarate + ATP = (S)-oxalosuccinate + ADP + phosphate + H(+). This is 2-oxoglutarate carboxylase large subunit from Hydrogenobacter thermophilus (strain DSM 6534 / IAM 12695 / TK-6).